Consider the following 454-residue polypeptide: CCA-adding enzyme (454 aa).

The ATP site is built by Ser-51 and Lys-54. CTP is bound by residues Ser-51 and Lys-54. 3 residues coordinate Mg(2+): Asp-63, Asp-65, and Asp-118. Residues His-141, Lys-161, and Tyr-170 each contribute to the ATP site. His-141, Lys-161, and Tyr-170 together coordinate CTP.

This sequence belongs to the tRNA nucleotidyltransferase/poly(A) polymerase family. Archaeal CCA-adding enzyme subfamily. Homodimer. The cofactor is Mg(2+).

The enzyme catalyses a tRNA precursor + 2 CTP + ATP = a tRNA with a 3' CCA end + 3 diphosphate. It catalyses the reaction a tRNA with a 3' CCA end + 2 CTP + ATP = a tRNA with a 3' CCACCA end + 3 diphosphate. In terms of biological role, catalyzes the addition and repair of the essential 3'-terminal CCA sequence in tRNAs without using a nucleic acid template. Adds these three nucleotides in the order of C, C, and A to the tRNA nucleotide-73, using CTP and ATP as substrates and producing inorganic pyrophosphate. tRNA 3'-terminal CCA addition is required both for tRNA processing and repair. Also involved in tRNA surveillance by mediating tandem CCA addition to generate a CCACCA at the 3' terminus of unstable tRNAs. While stable tRNAs receive only 3'-terminal CCA, unstable tRNAs are marked with CCACCA and rapidly degraded. The protein is CCA-adding enzyme of Methanothermobacter thermautotrophicus (strain ATCC 29096 / DSM 1053 / JCM 10044 / NBRC 100330 / Delta H) (Methanobacterium thermoautotrophicum).